A 108-amino-acid polypeptide reads, in one-letter code: Phosphoribosyl-ATP pyrophosphatase (108 aa).

It belongs to the PRA-PH family.

It is found in the cytoplasm. It catalyses the reaction 1-(5-phospho-beta-D-ribosyl)-ATP + H2O = 1-(5-phospho-beta-D-ribosyl)-5'-AMP + diphosphate + H(+). It participates in amino-acid biosynthesis; L-histidine biosynthesis; L-histidine from 5-phospho-alpha-D-ribose 1-diphosphate: step 2/9. The sequence is that of Phosphoribosyl-ATP pyrophosphatase from Dechloromonas aromatica (strain RCB).